Here is a 515-residue protein sequence, read N- to C-terminus: 2,3-bisphosphoglycerate-independent phosphoglycerate mutase (515 aa).

Mn(2+) contacts are provided by aspartate 17 and serine 67. Serine 67 functions as the Phosphoserine intermediate in the catalytic mechanism. Substrate is bound by residues histidine 128, 157 to 158 (RD), arginine 190, arginine 196, 262 to 265 (RADR), and lysine 336. The Mn(2+) site is built by aspartate 403, histidine 407, aspartate 444, histidine 445, and histidine 463.

It belongs to the BPG-independent phosphoglycerate mutase family. In terms of assembly, monomer. Mn(2+) serves as cofactor.

The enzyme catalyses (2R)-2-phosphoglycerate = (2R)-3-phosphoglycerate. It functions in the pathway carbohydrate degradation; glycolysis; pyruvate from D-glyceraldehyde 3-phosphate: step 3/5. In terms of biological role, catalyzes the interconversion of 2-phosphoglycerate and 3-phosphoglycerate. The sequence is that of 2,3-bisphosphoglycerate-independent phosphoglycerate mutase from Acinetobacter baylyi (strain ATCC 33305 / BD413 / ADP1).